We begin with the raw amino-acid sequence, 467 residues long: Ribulose bisphosphate carboxylase large chain (467 aa).

The propeptide occupies Met-1–Ser-2. N-acetylproline is present on Pro-3. Position 14 is an N6,N6,N6-trimethyllysine (Lys-14). Residues Asn-123 and Thr-173 each coordinate substrate. Lys-175 serves as the catalytic Proton acceptor. Lys-177 provides a ligand contact to substrate. Residues Lys-201, Asp-203, and Glu-204 each coordinate Mg(2+). At Lys-201 the chain carries N6-carboxylysine. His-294 functions as the Proton acceptor in the catalytic mechanism. Residues Arg-295, His-327, and Ser-379 each coordinate substrate.

The protein belongs to the RuBisCO large chain family. Type I subfamily. Heterohexadecamer of 8 large chains and 8 small chains; disulfide-linked. The disulfide link is formed within the large subunit homodimers. It depends on Mg(2+) as a cofactor. Post-translationally, the disulfide bond which can form in the large chain dimeric partners within the hexadecamer appears to be associated with oxidative stress and protein turnover.

The protein localises to the plastid. It is found in the chloroplast. The catalysed reaction is 2 (2R)-3-phosphoglycerate + 2 H(+) = D-ribulose 1,5-bisphosphate + CO2 + H2O. It catalyses the reaction D-ribulose 1,5-bisphosphate + O2 = 2-phosphoglycolate + (2R)-3-phosphoglycerate + 2 H(+). Its function is as follows. RuBisCO catalyzes two reactions: the carboxylation of D-ribulose 1,5-bisphosphate, the primary event in carbon dioxide fixation, as well as the oxidative fragmentation of the pentose substrate in the photorespiration process. Both reactions occur simultaneously and in competition at the same active site. This Phoenix reclinata (Senegal date palm) protein is Ribulose bisphosphate carboxylase large chain.